The following is a 68-amino-acid chain: Large ribosomal subunit protein bL35 (68 aa).

It belongs to the bacterial ribosomal protein bL35 family.

This Wolbachia pipientis subsp. Culex pipiens (strain wPip) protein is Large ribosomal subunit protein bL35.